The chain runs to 458 residues: MRGPVKIVATVGPSSSSASILAQMLSLGVDVARINASHGGVEQWNSMLESLRRAEEAVGKRVGVAVDLEGPRVRTGNSEPVKLEKGDLVTLGFMEGDVPVDARQFFETIDEGDIVLLDDGKIILQVESVEGFRVKARVLEGGVLGPRKGVVVRGKEPDLPPLSAKDRRALEFFADKGVSHVYVSFARSAEHVEKVRTVVRRLGLRQARIFAKIEGPSGVSRIGEIAEASDGVIIARGDLGMHYSLEELPEIQELIVWEARKRYKTVVLATEFLSSMIEKPVPTRSEVVDIYQAVLQTADALMLTGETAIGKYPVKSVQWMAKISSRAYKKLATSPPERPRPTSTPYKLALGLVELAESLDSPLVVYSKTGRFAERLASFKPLKTFYVGVPSREVERVVRHLWGAEPIVVGDYPYEAGLAKTYEKLRRENIIHGDETVVEAAWSSERGIYIIRVRNLEF.

Position 33 (Arg-33) interacts with substrate. Positions 35, 37, and 67 each coordinate K(+). 35-38 (NASH) contacts ATP. Residues Arg-74 and Lys-148 each contribute to the ATP site. Mg(2+) is bound at residue Glu-214. Substrate contacts are provided by Gly-237, Asp-238, and Thr-270. Position 238 (Asp-238) interacts with Mg(2+).

The protein belongs to the pyruvate kinase family. As to quaternary structure, homotetramer. A divalent metal cation serves as cofactor.

The enzyme catalyses pyruvate + ATP = phosphoenolpyruvate + ADP + H(+). The protein operates within carbohydrate degradation; glycolysis; pyruvate from D-glyceraldehyde 3-phosphate: step 5/5. With respect to regulation, not activated by classical allosteric effectors. The protein is Pyruvate kinase (pyk) of Aeropyrum pernix (strain ATCC 700893 / DSM 11879 / JCM 9820 / NBRC 100138 / K1).